The chain runs to 81 residues: Tissue- and phase-specific nuclear protein (81 aa).

In terms of tissue distribution, expressed in oviduct, where expression levels are higher in uterine sections than in tuba sections. No expression detected in small intestine and liver (at protein level).

The protein localises to the nucleus. The polypeptide is Tissue- and phase-specific nuclear protein (Podarcis siculus (Italian wall lizard)).